We begin with the raw amino-acid sequence, 175 residues long: Alpha-crystallin B chain (175 aa).

Met1 carries the N-acetylmethionine modification. Residue Ser19 is modified to Phosphoserine. The O-linked (GlcNAc) serine glycan is linked to Ser41. Residues Ser45 and Ser59 each carry the phosphoserine modification. One can recognise a sHSP domain in the interval Arg56–Glu164. His83 serves as a coordination point for Zn(2+). Lys92 is modified (N6-acetyllysine). Zn(2+) contacts are provided by His104, Glu106, His111, and His119. Residues Val142–Lys175 are disordered. Residue Lys166 is modified to N6-acetyllysine. A glycan (O-linked (GlcNAc) threonine) is linked at Thr170.

It belongs to the small heat shock protein (HSP20) family. Heteromer composed of three CRYAA and one CRYAB subunits. Aggregates with homologous proteins, including the small heat shock protein HSPB1, to form large heteromeric complexes. Inter-subunit bridging via zinc ions enhances stability, which is crucial as there is no protein turn over in the lens. Interacts with HSPBAP1 and TTN/titin. Interacts with TMEM109; in the cellular response to DNA damage. Interacts with DES; binds rapidly during early stages of DES filament assembly and a reduced binding seen in the later stages. Interacts with TMED10; the interaction mediates the translocation from the cytoplasm into the ERGIC (endoplasmic reticulum-Golgi intermediate compartment) and thereby secretion. Interacts with ATP6V1A and with MTOR, forming a ternary complex.

It is found in the cytoplasm. Its subcellular location is the nucleus. The protein localises to the secreted. The protein resides in the lysosome. Functionally, may contribute to the transparency and refractive index of the lens. Has chaperone-like activity, preventing aggregation of various proteins under a wide range of stress conditions. In lens epithelial cells, stabilizes the ATP6V1A protein, preventing its degradation by the proteasome. The polypeptide is Alpha-crystallin B chain (CRYAB) (Macaca fascicularis (Crab-eating macaque)).